We begin with the raw amino-acid sequence, 380 residues long: Proline iminopeptidase (380 aa).

In terms of domain architecture, AB hydrolase-1 spans 98–360 (PVVFLHGGPG…IVYDAGHSAN (263 aa)). Serine 172 functions as the Nucleophile in the catalytic mechanism. The active site involves aspartate 329. The active-site Proton donor is the histidine 357.

Belongs to the peptidase S33 family.

The protein resides in the cytoplasm. It catalyses the reaction Release of N-terminal proline from a peptide.. Its function is as follows. Specifically catalyzes the removal of N-terminal proline residues from peptides. This chain is Proline iminopeptidase (PIP), found in Arabidopsis thaliana (Mouse-ear cress).